A 1132-amino-acid chain; its full sequence is Fas-binding factor 1 homolog (1132 aa).

3 disordered regions span residues 18–50 (DDLL…LQAS), 65–84 (AEDM…PQAV), and 89–570 (KEMD…QSYE). A compositionally biased stretch (low complexity) spans 35–46 (AGVSSGRARGSS). Basic and acidic residues-rich tracts occupy residues 134-148 (APEK…DKKP) and 189-206 (GSER…EKDP). Acidic residues predominate over residues 226 to 235 (TFEDDDDDMM). Basic and acidic residues-rich tracts occupy residues 244-270 (QKGD…DELL) and 278-303 (ILER…PEKE). Composition is skewed to polar residues over residues 331 to 341 (RQSVSRFSAEN) and 388 to 410 (AKTS…SKPN). 2 stretches are compositionally biased toward low complexity: residues 458–480 (ATST…ADSS) and 511–520 (PSDPAASSPA). The segment covering 534–548 (TMPSTPLQAASQLQA) has biased composition (polar residues). Coiled coils occupy residues 576 to 727 (RAAL…TSAT), 769 to 882 (ARQR…LAVE), and 918 to 1044 (LAKE…HKKL).

It is found in the cytoplasm. The protein localises to the cytoskeleton. The protein resides in the microtubule organizing center. It localises to the centrosome. Its subcellular location is the centriole. It is found in the spindle pole. The protein localises to the cell junction. In terms of biological role, keratin-binding protein required for epithelial cell polarization. Required for ciliogenesis. This Gallus gallus (Chicken) protein is Fas-binding factor 1 homolog (FBF1).